A 256-amino-acid chain; its full sequence is Small ribosomal subunit protein eS1 (256 aa).

Residues 1 to 18 show a composition bias toward basic residues; that stretch reads MAVGKNKRLSKGKKGIKK. The segment at 1 to 20 is disordered; that stretch reads MAVGKNKRLSKGKKGIKKRT. Alanine 2 is modified (N-acetylalanine; partial).

Belongs to the eukaryotic ribosomal protein eS1 family. Component of the small ribosomal subunit. Mature ribosomes consist of a small (40S) and a large (60S) subunit. The 40S subunit contains about 33 different proteins and 1 molecule of RNA (18S). The 60S subunit contains about 49 different proteins and 3 molecules of RNA (25S, 5.8S and 5S).

It is found in the cytoplasm. This chain is Small ribosomal subunit protein eS1 (rps1), found in Aspergillus flavus (strain ATCC 200026 / FGSC A1120 / IAM 13836 / NRRL 3357 / JCM 12722 / SRRC 167).